Consider the following 315-residue polypeptide: Ribosomal RNA small subunit methyltransferase H (315 aa).

The interval 1-21 (MNVVNVVPMHLPPPPPRPRGE) is disordered. S-adenosyl-L-methionine-binding positions include 51 to 53 (GGH), Asp-69, Phe-96, Asp-117, and Gln-124. Positions 281-315 (KKPVTAGDDEVEGNPRARSAKLRAARRVGGAEALA) are disordered.

Belongs to the methyltransferase superfamily. RsmH family.

It localises to the cytoplasm. It catalyses the reaction cytidine(1402) in 16S rRNA + S-adenosyl-L-methionine = N(4)-methylcytidine(1402) in 16S rRNA + S-adenosyl-L-homocysteine + H(+). Specifically methylates the N4 position of cytidine in position 1402 (C1402) of 16S rRNA. The polypeptide is Ribosomal RNA small subunit methyltransferase H (Sorangium cellulosum (strain So ce56) (Polyangium cellulosum (strain So ce56))).